Here is a 363-residue protein sequence, read N- to C-terminus: NAD(P)H-quinone oxidoreductase subunit 1, chloroplastic (363 aa).

The next 6 membrane-spanning stretches (helical) occupy residues 30–50 (LVPILTLVLGITIGVLVIVWL), 98–118 (FSIGPAIAVISILLSFSVIPF), 129–149 (IGIFLWIAISSIAPVGLLMSG), 248–268 (YSGIKFGLFYVASYLNLLLSS), 300–320 (IIGTTIGIFITLAKTYLFLFI), and 343–363 (FLLPISLGNLLLTTSFQLLSL).

The protein belongs to the complex I subunit 1 family. In terms of assembly, NDH is composed of at least 16 different subunits, 5 of which are encoded in the nucleus.

It is found in the plastid. Its subcellular location is the chloroplast thylakoid membrane. The catalysed reaction is a plastoquinone + NADH + (n+1) H(+)(in) = a plastoquinol + NAD(+) + n H(+)(out). It carries out the reaction a plastoquinone + NADPH + (n+1) H(+)(in) = a plastoquinol + NADP(+) + n H(+)(out). NDH shuttles electrons from NAD(P)H:plastoquinone, via FMN and iron-sulfur (Fe-S) centers, to quinones in the photosynthetic chain and possibly in a chloroplast respiratory chain. The immediate electron acceptor for the enzyme in this species is believed to be plastoquinone. Couples the redox reaction to proton translocation, and thus conserves the redox energy in a proton gradient. This Gossypium hirsutum (Upland cotton) protein is NAD(P)H-quinone oxidoreductase subunit 1, chloroplastic.